A 311-amino-acid chain; its full sequence is Aspartate carbamoyltransferase catalytic subunit (311 aa).

Carbamoyl phosphate contacts are provided by Arg-55 and Thr-56. Lys-85 contributes to the L-aspartate binding site. Carbamoyl phosphate contacts are provided by Arg-106, His-135, and Gln-138. L-aspartate is bound by residues Arg-168 and Arg-230. Residues Leu-268 and Pro-269 each contribute to the carbamoyl phosphate site.

It belongs to the aspartate/ornithine carbamoyltransferase superfamily. ATCase family. In terms of assembly, heterododecamer (2C3:3R2) of six catalytic PyrB chains organized as two trimers (C3), and six regulatory PyrI chains organized as three dimers (R2).

It carries out the reaction carbamoyl phosphate + L-aspartate = N-carbamoyl-L-aspartate + phosphate + H(+). The protein operates within pyrimidine metabolism; UMP biosynthesis via de novo pathway; (S)-dihydroorotate from bicarbonate: step 2/3. Functionally, catalyzes the condensation of carbamoyl phosphate and aspartate to form carbamoyl aspartate and inorganic phosphate, the committed step in the de novo pyrimidine nucleotide biosynthesis pathway. In Yersinia pestis, this protein is Aspartate carbamoyltransferase catalytic subunit.